Here is a 209-residue protein sequence, read N- to C-terminus: dITP/XTP pyrophosphatase (209 aa).

Substrate is bound at residue 22–27; the sequence is SHNQGK. The active-site Proton acceptor is Asp83. Asp83 contacts Mg(2+). Residues Ser84, 167–170, Lys190, and 195–196 contribute to the substrate site; these read FGYD and HR.

The protein belongs to the HAM1 NTPase family. Homodimer. The cofactor is Mg(2+).

It catalyses the reaction XTP + H2O = XMP + diphosphate + H(+). The enzyme catalyses dITP + H2O = dIMP + diphosphate + H(+). It carries out the reaction ITP + H2O = IMP + diphosphate + H(+). Its function is as follows. Pyrophosphatase that catalyzes the hydrolysis of nucleoside triphosphates to their monophosphate derivatives, with a high preference for the non-canonical purine nucleotides XTP (xanthosine triphosphate), dITP (deoxyinosine triphosphate) and ITP. Seems to function as a house-cleaning enzyme that removes non-canonical purine nucleotides from the nucleotide pool, thus preventing their incorporation into DNA/RNA and avoiding chromosomal lesions. This chain is dITP/XTP pyrophosphatase, found in Zymomonas mobilis subsp. mobilis (strain ATCC 31821 / ZM4 / CP4).